Here is a 491-residue protein sequence, read N- to C-terminus: 3-octaprenyl-4-hydroxybenzoate carboxy-lyase (491 aa).

Asn176 is a binding site for Mn(2+). Residues 179–181 (IYR), 193–195 (RWL), and 198–199 (RG) contribute to the prenylated FMN site. Residue Glu242 participates in Mn(2+) binding. Asp291 (proton donor) is an active-site residue.

It belongs to the UbiD family. Homohexamer. Prenylated FMN serves as cofactor. Mn(2+) is required as a cofactor.

The protein localises to the cell membrane. The enzyme catalyses a 4-hydroxy-3-(all-trans-polyprenyl)benzoate + H(+) = a 2-(all-trans-polyprenyl)phenol + CO2. It participates in cofactor biosynthesis; ubiquinone biosynthesis. Its function is as follows. Catalyzes the decarboxylation of 3-octaprenyl-4-hydroxy benzoate to 2-octaprenylphenol, an intermediate step in ubiquinone biosynthesis. The polypeptide is 3-octaprenyl-4-hydroxybenzoate carboxy-lyase (Chromobacterium violaceum (strain ATCC 12472 / DSM 30191 / JCM 1249 / CCUG 213 / NBRC 12614 / NCIMB 9131 / NCTC 9757 / MK)).